A 296-amino-acid chain; its full sequence is Homoserine kinase (296 aa).

P85–A95 provides a ligand contact to ATP.

This sequence belongs to the GHMP kinase family. Homoserine kinase subfamily.

The protein localises to the cytoplasm. It carries out the reaction L-homoserine + ATP = O-phospho-L-homoserine + ADP + H(+). It functions in the pathway amino-acid biosynthesis; L-threonine biosynthesis; L-threonine from L-aspartate: step 4/5. Its function is as follows. Catalyzes the ATP-dependent phosphorylation of L-homoserine to L-homoserine phosphate. This Moorella thermoacetica (strain ATCC 39073 / JCM 9320) protein is Homoserine kinase.